The sequence spans 102 residues: Protein S100-A11 (102 aa).

S2 is subject to Phosphoserine. Position 7 is a phosphothreonine (T7). 2 consecutive EF-hand domains span residues 12–47 and 52–87; these read ESLI…LAAF and KDPG…LAVA. K24 carries the post-translational modification N6-acetyllysine. 8 residues coordinate Ca(2+): S28, T30, E35, D65, N67, D69, Q71, and E76.

This sequence belongs to the S-100 family. Homodimer; disulfide-linked. Post-translationally, phosphorylation at Thr-7 significantly suppresses homodimerization and promotes association with NCL/nucleolin which induces nuclear translocation. In terms of tissue distribution, smooth muscle and non-muscle tissues.

The protein localises to the cytoplasm. It is found in the nucleus. Functionally, facilitates the differentiation and the cornification of keratinocytes. This Oryctolagus cuniculus (Rabbit) protein is Protein S100-A11 (S100A11).